A 356-amino-acid chain; its full sequence is MPLVAHSNLPTFERLRKEGGTVLPNDYALHQDIRALHIGLLNMMPDAALAATERQFFRLVGESNQIAQFYMHPFTLAELPRGPGGQAHVERYYETFDTIQREGLDALIITGANVSQPDLALEPFWEPLAEVVEWAWKNVTSTLCSCLTTHAVMQSRYGERRRHRGAKLWGVFDHRVVDRTHPLVAGVNTRFDVPHSRFNDVSREQFDRHRLKVLVESERAGVHLAVSEDGFRLVFFQGHPEYDSISLLKEYKREVLRFVNGEREEFPPLPERYLSPQAAAILEEHRERVEQARQRRVPAPELPEPLLVGRLDNTWHDSALAVVNNWIGNVYQFTNHDRRIPFRPGVDPNAPLNWSR.

The active-site Acyl-thioester intermediate is the Cys146. Substrate contacts are provided by Lys167 and Ser196. His239 functions as the Proton acceptor in the catalytic mechanism. Glu241 is a catalytic residue. Arg253 is a binding site for substrate.

It belongs to the MetA family.

Its subcellular location is the cytoplasm. It carries out the reaction L-homoserine + succinyl-CoA = O-succinyl-L-homoserine + CoA. It participates in amino-acid biosynthesis; L-methionine biosynthesis via de novo pathway; O-succinyl-L-homoserine from L-homoserine: step 1/1. Its function is as follows. Transfers a succinyl group from succinyl-CoA to L-homoserine, forming succinyl-L-homoserine. The protein is Homoserine O-succinyltransferase of Thioalkalivibrio nitratireducens (strain DSM 14787 / UNIQEM 213 / ALEN2).